The chain runs to 90 residues: RNA-binding protein Hfq (90 aa).

Residues 9 to 68 (DPFLNALRRERVPVSIYLVNGIKLQGQVESFDQFVILLKNTVSQMVYKHAISTVVPARPF) enclose the Sm domain.

This sequence belongs to the Hfq family. Homohexamer.

Functionally, RNA chaperone that binds small regulatory RNA (sRNAs) and mRNAs to facilitate mRNA translational regulation in response to envelope stress, environmental stress and changes in metabolite concentrations. Also binds with high specificity to tRNAs. The chain is RNA-binding protein Hfq from Shewanella baltica (strain OS155 / ATCC BAA-1091).